A 381-amino-acid chain; its full sequence is Pyrimidine monooxygenase RutA (381 aa).

Residues 66–67, Asn-132, Glu-141, 157–158, and Ser-207 contribute to the FMN site; these read IK and RY.

The protein belongs to the NtaA/SnaA/DszA monooxygenase family. RutA subfamily.

It carries out the reaction uracil + FMNH2 + NADH + O2 = (Z)-3-ureidoacrylate + FMN + NAD(+) + H2O + H(+). The enzyme catalyses thymine + FMNH2 + NADH + O2 = (Z)-2-methylureidoacrylate + FMN + NAD(+) + H2O + H(+). In terms of biological role, catalyzes the pyrimidine ring opening between N-3 and C-4 by an unusual flavin hydroperoxide-catalyzed mechanism, adding oxygen atoms in the process to yield ureidoacrylate peracid, that immediately reacts with FMN forming ureidoacrylate and FMN-N(5)-oxide. The FMN-N(5)-oxide reacts spontaneously with NADH to produce FMN. Requires the flavin reductase RutF to regenerate FMN in vivo. The sequence is that of Pyrimidine monooxygenase RutA from Methylobacterium radiotolerans (strain ATCC 27329 / DSM 1819 / JCM 2831 / NBRC 15690 / NCIMB 10815 / 0-1).